Reading from the N-terminus, the 114-residue chain is Protein lin-52 homolog (114 aa).

Serine 26 and serine 51 each carry phosphoserine.

It belongs to the lin-52 family. In terms of assembly, component of the DREAM complex (also named LINC complex) at least composed of E2F4, E2F5, LIN9, LIN37, LIN52, LIN54, MYBL1, MYBL2, RBL1, RBL2, RBBP4, TFDP1 and TFDP2. The complex exists in quiescent cells where it represses cell cycle-dependent genes. It dissociates in S phase when LIN9, LIN37, LIN52 and LIN54 form a subcomplex that binds to MYBL2.

This is Protein lin-52 homolog (LIN52) from Pongo abelii (Sumatran orangutan).